The primary structure comprises 512 residues: ATP synthase subunit alpha (512 aa).

ATP is bound at residue Gly-169 to Thr-176.

This sequence belongs to the ATPase alpha/beta chains family. In terms of assembly, F-type ATPases have 2 components, CF(1) - the catalytic core - and CF(0) - the membrane proton channel. CF(1) has five subunits: alpha(3), beta(3), gamma(1), delta(1), epsilon(1). CF(0) has three main subunits: a(1), b(2) and c(9-12). The alpha and beta chains form an alternating ring which encloses part of the gamma chain. CF(1) is attached to CF(0) by a central stalk formed by the gamma and epsilon chains, while a peripheral stalk is formed by the delta and b chains.

It is found in the cell inner membrane. It carries out the reaction ATP + H2O + 4 H(+)(in) = ADP + phosphate + 5 H(+)(out). Functionally, produces ATP from ADP in the presence of a proton gradient across the membrane. The alpha chain is a regulatory subunit. In Leptothrix cholodnii (strain ATCC 51168 / LMG 8142 / SP-6) (Leptothrix discophora (strain SP-6)), this protein is ATP synthase subunit alpha.